The primary structure comprises 121 residues: Large ribosomal subunit protein uL18c (121 aa).

Belongs to the universal ribosomal protein uL18 family. In terms of assembly, part of the 50S ribosomal subunit; contacts the 5S rRNA.

The protein resides in the plastid. It localises to the cyanelle. Its function is as follows. Binds 5S rRNA, forms part of the central protuberance of the 50S subunit. This chain is Large ribosomal subunit protein uL18c (rpl18), found in Cyanophora paradoxa.